The sequence spans 125 residues: Small ribosomal subunit protein uS12 (125 aa).

Residue Asp89 is modified to 3-methylthioaspartic acid. The disordered stretch occupies residues 106-125 (GVKDRKQSRSKYGAKRPKKA). Positions 113 to 125 (SRSKYGAKRPKKA) are enriched in basic residues.

The protein belongs to the universal ribosomal protein uS12 family. In terms of assembly, part of the 30S ribosomal subunit. Contacts proteins S8 and S17. May interact with IF1 in the 30S initiation complex.

Functionally, with S4 and S5 plays an important role in translational accuracy. Its function is as follows. Interacts with and stabilizes bases of the 16S rRNA that are involved in tRNA selection in the A site and with the mRNA backbone. Located at the interface of the 30S and 50S subunits, it traverses the body of the 30S subunit contacting proteins on the other side and probably holding the rRNA structure together. The combined cluster of proteins S8, S12 and S17 appears to hold together the shoulder and platform of the 30S subunit. This chain is Small ribosomal subunit protein uS12, found in Aromatoleum aromaticum (strain DSM 19018 / LMG 30748 / EbN1) (Azoarcus sp. (strain EbN1)).